A 500-amino-acid chain; its full sequence is Organic cation/carnitine transporter 7 (500 aa).

Residues 1–23 are Cytoplasmic-facing; that stretch reads MADGNTRFTVDEALVAMGFGKFQ. A helical transmembrane segment spans residues 24–44; that stretch reads IYVLAYAGMGWVAEAMEMMLL. Topologically, residues 45–62 are extracellular; that stretch reads SFVGPAVQSLWNLSARQE. Asn-56 carries N-linked (GlcNAc...) asparagine glycosylation. The chain crosses the membrane as a helical span at residues 63 to 83; sequence SLITSVVFAGMLIGAYSWGIV. Topologically, residues 84–97 are cytoplasmic; the sequence is SDKHGRRKGFIITA. A helical transmembrane segment spans residues 98-118; it reads VVTFVAGFLSAFSPNYMWLII. Topologically, residues 119-120 are extracellular; that stretch reads LR. A helical membrane pass occupies residues 121 to 141; it reads CLVGLGLGGGPVLASWYLEFI. 137 to 144 provides a ligand contact to ATP; it reads YLEFIPAP. The Cytoplasmic portion of the chain corresponds to 142-150; sequence PAPSRGTWM. The chain crosses the membrane as a helical span at residues 151–171; sequence VVFSAFWTVGTIFEASLAWLV. Residues 172 to 174 are Extracellular-facing; the sequence is MPR. Residues 175–195 traverse the membrane as a helical segment; it reads LGWRWLLAFSSVPSSLLLLFY. Topologically, residues 196–293 are cytoplasmic; the sequence is RWTSESPRYL…ALLSPTLMKR (98 aa). The helical transmembrane segment at 294 to 314 threads the bilayer; sequence TLLLWVVFFGNAFAYYGVVLL. Topologically, residues 315–341 are extracellular; that stretch reads TTELNNSHNRCYPTEKQLRNSNDVNYR. An N-linked (GlcNAc...) asparagine glycan is attached at Asn-319. A helical transmembrane segment spans residues 342-362; sequence DVFIASFAEFPGLLISAAMVD. The Cytoplasmic segment spans residues 363 to 367; the sequence is RLGRK. Residues 368-387 form a helical membrane-spanning segment; that stretch reads ASMASMLFTCCIFLLPLLSH. The Extracellular segment spans residues 388–401; the sequence is QSPFITTVLLFGGR. A helical transmembrane segment spans residues 402–422; sequence ICISAAFTVVYIYAPEIYPTA. Over 423 to 429 the chain is Cytoplasmic; it reads VRTTGVG. Residues 430 to 450 traverse the membrane as a helical segment; the sequence is VGSSVGRIGGILCPLVAVGLV. Topologically, residues 451–456 are extracellular; the sequence is HGCHQT. A helical membrane pass occupies residues 457–477; that stretch reads IAVLLFEVVILVSGICVCLFP. The Cytoplasmic segment spans residues 478–500; the sequence is FETSGRDLTDSISASKEPPSASV.

Belongs to the major facilitator (TC 2.A.1) superfamily. Organic cation transporter (TC 2.A.1.19) family. As to expression, expressed in pollen.

The protein localises to the membrane. Its function is as follows. High affinity carnitine transporter involved in the active cellular uptake of carnitine. Also transports organic cations. The polypeptide is Organic cation/carnitine transporter 7 (OCT7) (Arabidopsis thaliana (Mouse-ear cress)).